A 387-amino-acid chain; its full sequence is Monomeric sarcosine oxidase (387 aa).

Position 6-36 (6-36) interacts with FAD; the sequence is DVIVVGAGSMGMAAGYYLAKQGVKTLLVDSF. Position 316 is an S-8alpha-FAD cysteine (Cys-316).

This sequence belongs to the MSOX/MTOX family. MSOX subfamily. Monomer. FAD is required as a cofactor.

It is found in the cytoplasm. It catalyses the reaction sarcosine + O2 + H2O = formaldehyde + glycine + H2O2. Catalyzes the oxidative demethylation of sarcosine. In Bacillus sp. (strain NS-129), this protein is Monomeric sarcosine oxidase (soxA).